Consider the following 123-residue polypeptide: Basic myotoxic phospholipase A2 PhTX-II (123 aa).

Disulfide bonds link cysteine 26–cysteine 116, cysteine 28–cysteine 45, cysteine 44–cysteine 95, cysteine 50–cysteine 123, cysteine 51–cysteine 88, cysteine 58–cysteine 81, and cysteine 75–cysteine 86. Ca(2+) contacts are provided by tyrosine 27, glycine 29, and glycine 31. Residue histidine 48 is part of the active site. Aspartate 49 provides a ligand contact to Ca(2+). Aspartate 89 is a catalytic residue.

In terms of assembly, monomer. It depends on Ca(2+) as a cofactor. Expressed by the venom gland.

The protein resides in the secreted. The catalysed reaction is a 1,2-diacyl-sn-glycero-3-phosphocholine + H2O = a 1-acyl-sn-glycero-3-phosphocholine + a fatty acid + H(+). With respect to regulation, P-bromophenacyl bromide (BPB) completely inhibits the catalytic and edematogenic activities. Enzymatic activity is also diminished by EDTA, heparin and crotapotins F2 and F3 from C.d.collilineatus. Inhibited by divalent cations different from calcium ions (cadmium, magnesium, manganese, zinc), since they act as competitive antagonists of this cofactor. Snake venom phospholipase A2 (PLA2) that induces myotoxicity and local edema in mice. In addition, it causes neuromuscular blockade in avian neuromuscular preparations with a significant direct action on skeletal muscle function. Myotoxic action is exerted by both enzymatic and non-enzymatic mechanisms. PLA2 catalyzes the calcium-dependent hydrolysis of the 2-acyl groups in 3-sn-phosphoglycerides. The protein is Basic myotoxic phospholipase A2 PhTX-II of Bothrocophias hyoprora (Amazonian hognose viper).